Here is a 455-residue protein sequence, read N- to C-terminus: SH3 domain-binding protein 5 (455 aa).

The span at 1–12 shows a compositional bias: basic and acidic residues; sequence MDAALKRSRSEE. The segment at 1–63 is disordered; that stretch reads MDAALKRSRS…QSTDDINRRE (63 aa). Positions 22-41 are enriched in acidic residues; sequence DEEEEEEEGMEQGLEEEEEV. A sufficient for interaction with RAB11A and for guanine nucleotide exchange activity region spans residues 31–265; sequence MEQGLEEEEE…EIHERRRSSA (235 aa). Residues 42 to 51 are compositionally biased toward basic and acidic residues; sequence DPRIQGELEK. 4 coiled-coil regions span residues 44–90, 97–145, 154–200, and 211–255; these read RIQG…LVKK, DSKP…RLLE, AWQE…LEKK, and YFEL…MISD. Disordered regions lie at residues 259-293 and 306-345; these read ERRR…PEPD and SCSN…VRPG. The segment covering 306–317 has biased composition (acidic residues); that stretch reads SCSNFVSEDDSE. Positions 320-332 are enriched in low complexity; that stretch reads SVSSFSSGPTSPS. The residue at position 351 (Ser-351) is a Phosphoserine; by MAPK12 and MAPK9. The disordered stretch occupies residues 369–435; that stretch reads SECSGASSPE…ALENRMKQLS (67 aa). A phosphoserine mark is found at Ser-375 and Ser-376. A compositionally biased stretch (basic and acidic residues) spans 380 to 396; it reads EVERGDRAEGAENKTSD. Residues 403-421 show a composition bias toward low complexity; the sequence is GLSSSSGSGGSSKSQSSTS. A phosphoserine mark is found at Ser-418 and Ser-421.

Belongs to the SH3BP5 family. As to quaternary structure, interacts with BTK. Interacts with all isoforms of MAPK8, MAPK9, MAPK10 and MAPK12. Interacts with GDP-bound and nucleotide-free forms of RAB11A. In terms of tissue distribution, highly expressed in testis and ovaries. It is also expressed in a variety of tissues including spleen, lymph node, thymus, bone marrow, fetal liver, colon, small intestine and prostate.

Its subcellular location is the cytoplasmic vesicle membrane. It is found in the mitochondrion. In terms of biological role, functions as a guanine nucleotide exchange factor (GEF) with specificity for RAB11A and RAB25. Inhibits the auto- and transphosphorylation activity of BTK. Plays a negative regulatory role in BTK-related cytoplasmic signaling in B-cells. May be involved in BCR-induced apoptotic cell death. This is SH3 domain-binding protein 5 (SH3BP5) from Homo sapiens (Human).